The chain runs to 462 residues: Alanine racemase (462 aa).

Residue lysine 34 is the Proton acceptor; specific for D-alanine of the active site. Lysine 34 bears the N6-(pyridoxal phosphate)lysine mark. The tract at residues 73–132 is unknown insert; sequence ASWHESVFRHCEKNYTVIRRSNPVKNSVSQNFFNYFSGLQQCFAPRNDGSSIHATTPKAL. Arginine 193 provides a ligand contact to substrate. An RPE1 insert domain is found at 286 to 332; the sequence is DLSNNLSYKEEFEGDTERRTAAYINVREDSSTGSTYKLPLEGGYSRG. Tyrosine 357 functions as the Proton acceptor; specific for L-alanine in the catalytic mechanism. Residue methionine 405 coordinates substrate.

The protein belongs to the alanine racemase family. It depends on pyridoxal 5'-phosphate as a cofactor.

It carries out the reaction L-alanine = D-alanine. The protein operates within amino-acid biosynthesis; D-alanine biosynthesis; D-alanine from L-alanine: step 1/1. Catalyzes the interconversion of L-alanine and D-alanine. May also act on other amino acids. The protein is Alanine racemase (alr) of Rickettsia felis (strain ATCC VR-1525 / URRWXCal2) (Rickettsia azadi).